A 957-amino-acid polypeptide reads, in one-letter code: Glycine dehydrogenase (decarboxylating) (957 aa).

An N6-(pyridoxal phosphate)lysine modification is found at lysine 708.

Belongs to the GcvP family. As to quaternary structure, the glycine cleavage system is composed of four proteins: P, T, L and H. Pyridoxal 5'-phosphate is required as a cofactor.

It catalyses the reaction N(6)-[(R)-lipoyl]-L-lysyl-[glycine-cleavage complex H protein] + glycine + H(+) = N(6)-[(R)-S(8)-aminomethyldihydrolipoyl]-L-lysyl-[glycine-cleavage complex H protein] + CO2. Its function is as follows. The glycine cleavage system catalyzes the degradation of glycine. The P protein binds the alpha-amino group of glycine through its pyridoxal phosphate cofactor; CO(2) is released and the remaining methylamine moiety is then transferred to the lipoamide cofactor of the H protein. This Pectobacterium atrosepticum (strain SCRI 1043 / ATCC BAA-672) (Erwinia carotovora subsp. atroseptica) protein is Glycine dehydrogenase (decarboxylating).